Reading from the N-terminus, the 461-residue chain is Kynureninase (461 aa).

Residues Leu114, Thr115, 142-145 (FPSD), Asp228, His231, and Tyr253 contribute to the pyridoxal 5'-phosphate site. Lys254 is modified (N6-(pyridoxal phosphate)lysine). Pyridoxal 5'-phosphate contacts are provided by Trp288 and Asn316.

It belongs to the kynureninase family. In terms of assembly, homodimer. Pyridoxal 5'-phosphate is required as a cofactor.

It is found in the cytoplasm. The enzyme catalyses L-kynurenine + H2O = anthranilate + L-alanine + H(+). It carries out the reaction 3-hydroxy-L-kynurenine + H2O = 3-hydroxyanthranilate + L-alanine + H(+). Its pathway is amino-acid degradation; L-kynurenine degradation; L-alanine and anthranilate from L-kynurenine: step 1/1. It participates in cofactor biosynthesis; NAD(+) biosynthesis; quinolinate from L-kynurenine: step 2/3. Catalyzes the cleavage of L-kynurenine (L-Kyn) and L-3-hydroxykynurenine (L-3OHKyn) into anthranilic acid (AA) and 3-hydroxyanthranilic acid (3-OHAA), respectively. This is Kynureninase from Candida albicans (strain SC5314 / ATCC MYA-2876) (Yeast).